The sequence spans 116 residues: MSAVAEAPLPIQMTDAAANKVKTLITEEENPELKLRVYITGGGCSGFQYGFTFDEKINEGDTVVEKSGVTMVIDPMSLQYLVGGSVDYTEGLEGSRFTVTNPNATTTCGCGSSFSI.

Iron-sulfur cluster-binding residues include cysteine 44, cysteine 108, and cysteine 110.

The protein belongs to the HesB/IscA family. Homodimer. The cofactor is iron-sulfur cluster.

Functionally, required for insertion of 4Fe-4S clusters for at least IspG. The chain is Iron-sulfur cluster insertion protein ErpA from Aeromonas hydrophila subsp. hydrophila (strain ATCC 7966 / DSM 30187 / BCRC 13018 / CCUG 14551 / JCM 1027 / KCTC 2358 / NCIMB 9240 / NCTC 8049).